Consider the following 228-residue polypeptide: Histidine/lysine/arginine/ornithine transport system permease protein HisQ (228 aa).

At 1–12 (MLYGFSGVILQG) the chain is on the periplasmic side. Residues 13-33 (ALVTLELAISSVVLAVIIGLI) traverse the membrane as a helical segment. In terms of domain architecture, ABC transmembrane type-1 spans 13–212 (ALVTLELAIS…VFTTVSNGVL (200 aa)). At 34-58 (GAGGKLSQNRLSGLIFEGYTTLIRG) the chain is on the cytoplasmic side. A helical membrane pass occupies residues 59 to 79 (VPDLVLMLLIFYGLQIALNTV). Residues 80-87 (TEAMGVGQ) are Periplasmic-facing. Residues 88 to 108 (IDIDPMVAGIITLGFIYGAYF) traverse the membrane as a helical segment. Residues 109-148 (TETFRGAFMAVPKGHIEAATAFGFTRGQVFRRIMFPSMMR) are Cytoplasmic-facing. Residues 149-171 (YALPGIGNNWQVILKSTALVSLL) traverse the membrane as a helical segment. At 172–194 (GLEDVVKATQLAGKSTWEPFYFA) the chain is on the periplasmic side. The chain crosses the membrane as a helical span at residues 195-215 (IVCGVIYLVFTTVSNGVLLFL). Over 216–228 (ERRYSVGVKRADL) the chain is Cytoplasmic.

Belongs to the binding-protein-dependent transport system permease family. HisMQ subfamily. The HisPMQJ complex is composed of two ATP-binding proteins (HisP), two transmembrane proteins (HisM and HisQ) and a solute-binding protein (HisJ). The HisPMQ-ArgT complex is composed of two ATP-binding proteins (HisP), two transmembrane proteins (HisM and HisQ) and a solute-binding protein (ArgT).

It localises to the cell inner membrane. In terms of biological role, part of the ABC transporter complex HisPMQJ involved in histidine transport. Is also part of the ABC transporter complex HisPMQ-ArgT involved in lysine/arginine/ornithine transport. Probably responsible for the translocation of the substrate across the membrane. The chain is Histidine/lysine/arginine/ornithine transport system permease protein HisQ (hisQ) from Escherichia coli (strain K12).